A 373-amino-acid chain; its full sequence is 4-hydroxy-3-methylbut-2-en-1-yl diphosphate synthase (flavodoxin) (373 aa).

[4Fe-4S] cluster contacts are provided by cysteine 270, cysteine 273, cysteine 305, and glutamate 312.

This sequence belongs to the IspG family. Requires [4Fe-4S] cluster as cofactor.

It catalyses the reaction (2E)-4-hydroxy-3-methylbut-2-enyl diphosphate + oxidized [flavodoxin] + H2O + 2 H(+) = 2-C-methyl-D-erythritol 2,4-cyclic diphosphate + reduced [flavodoxin]. It functions in the pathway isoprenoid biosynthesis; isopentenyl diphosphate biosynthesis via DXP pathway; isopentenyl diphosphate from 1-deoxy-D-xylulose 5-phosphate: step 5/6. Its function is as follows. Converts 2C-methyl-D-erythritol 2,4-cyclodiphosphate (ME-2,4cPP) into 1-hydroxy-2-methyl-2-(E)-butenyl 4-diphosphate. This chain is 4-hydroxy-3-methylbut-2-en-1-yl diphosphate synthase (flavodoxin), found in Photorhabdus laumondii subsp. laumondii (strain DSM 15139 / CIP 105565 / TT01) (Photorhabdus luminescens subsp. laumondii).